A 1045-amino-acid chain; its full sequence is MAGNDWINSYLEAILDVGPGLDDAKSSLLLRERGRFSPTRYFVEEVITGFDETDLHRSWVRAQATRSPQERNTRLENMCWRIWNLARQKKQLENEEAQRKTKRRMELERGRREATADMSEDLSEGEKDISAHGDSTRPRLPRINSLDAMETWISQQKEKKLYLVLISLHGLIRGENMELGRDSDTGGQVKYVVELARALGSMPGVYRVDLLTRQVSSPDVDWSYGEPTEMLNPRDSNGFDDDDDEMGESSGAYIVRIPFGPRDKYIAKEELWPYIPEFVDGALNHIVQMSKVLGEQIGSGETVWPVAIHGHYADAGDSAALLSGGLNVPMLLTGHSLGRDKLEQLLKQGRMSKDDINNTYKIMRRIEAEELSLDASEIVITSTRQEIEEQWHLYDGFDPVLERKLRARMKRGVSCYGRFMPRMVVIPPGMEFNHIVPHEGDMDGETEETEEHPTSPDPPIWAEIMRFFSKPRKPMILALARPDPKKNITTLVKAFGECRPLRELANLTLIMGNRDGIDEMSSTSSSVLLSVLKLIDQYDLYGQVAYPKHHKQADVPEIYRLAAKTKGVFINPAFIEPFGLTLIEAAAHGLPMVATKNGGPVDIQRVLDNGLLVDPHEQQSIATALLKLVADKQLWTKCQQNGLKNIHLYSWPEHSKTYLSRIASSRQRQPQWQRSSDEGLDNQEPESPSDSLRDIKDISLNLEVLVRPEKRVKTLKILGLMTKANSRMLLCSWSNGVHKMLRKARFSDKVDQASSKYPAFRRRKLIYVIAVDGDYEDGLFDIVRRIFDAAGKEKIEGSIGFILSTSYSMPEIQNYLLSKGFNLHDFDAYICNSGSELYYSSLNSEESNIIADSDYHSHIEYRWGGEGLRRTLLRWAASITEKNGENEEQVITEDEEVSTGYCFAFKIKNQNKVPPTKELRKSMRIQALRCHVIYCQNGSKMNVIPVLASRSQALRYLYVRWGVELSKMVVFVGECGDTDYEGLLGGVHKTVILKGVSNTALRSLHANRSYPLSHVVSLDSPNIGEVSKGCSSSEIQSIVTKLSKA.

Basic and acidic residues-rich tracts occupy residues 93–115 (ENEE…REAT) and 124–137 (EGEK…DSTR). 3 disordered regions span residues 93–141 (ENEE…PRLP), 222–243 (WSYG…DDDD), and 662–692 (IASS…SDSL). The span at 664–674 (SSRQRQPQWQR) shows a compositional bias: low complexity.

It belongs to the glycosyltransferase 1 family. Homodimer or homotetramer. Predominantly active in tap root.

The catalysed reaction is beta-D-fructose 6-phosphate + UDP-alpha-D-glucose = sucrose 6(F)-phosphate + UDP + H(+). It participates in glycan biosynthesis; sucrose biosynthesis; sucrose from D-fructose 6-phosphate and UDP-alpha-D-glucose: step 1/2. With respect to regulation, activity is regulated by phosphorylation and moderated by concentration of metabolites and light. Its function is as follows. Plays a role in photosynthetic sucrose synthesis by catalyzing the rate-limiting step of sucrose biosynthesis from UDP-glucose and fructose- 6-phosphate. Involved in the regulation of carbon partitioning in the leaves of plants. May regulate the synthesis of sucrose and therefore play a major role as a limiting factor in the export of photoassimilates out of the leaf. Plays a role for sucrose availability that is essential for plant growth and fiber elongation. This is Probable sucrose-phosphate synthase (SPS) from Beta vulgaris (Sugar beet).